A 227-amino-acid chain; its full sequence is Lipoprotein-releasing system ATP-binding protein LolD (227 aa).

An ABC transporter domain is found at 6–227; the sequence is LKCENINKFY…MQDGLLKEGA (222 aa). 42 to 49 is an ATP binding site; that stretch reads GSSGSGKS.

It belongs to the ABC transporter superfamily. Lipoprotein translocase (TC 3.A.1.125) family. As to quaternary structure, the complex is composed of two ATP-binding proteins (LolD) and two transmembrane proteins (LolC and LolE).

It is found in the cell inner membrane. Functionally, part of the ABC transporter complex LolCDE involved in the translocation of mature outer membrane-directed lipoproteins, from the inner membrane to the periplasmic chaperone, LolA. Responsible for the formation of the LolA-lipoprotein complex in an ATP-dependent manner. The sequence is that of Lipoprotein-releasing system ATP-binding protein LolD from Haemophilus influenzae (strain 86-028NP).